The following is a 332-amino-acid chain: L-lactate dehydrogenase A chain (332 aa).

Residues 29–57 and Arg-99 each bind NAD(+); that span reads GMVG…MEEK. The substrate site is built by Arg-106, Asn-138, and Arg-169. Asn-138 contacts NAD(+). His-193 (proton acceptor) is an active-site residue. Residue Thr-248 participates in substrate binding.

Belongs to the LDH/MDH superfamily. LDH family. In terms of assembly, homotetramer.

Its subcellular location is the cytoplasm. The enzyme catalyses (S)-lactate + NAD(+) = pyruvate + NADH + H(+). The protein operates within fermentation; pyruvate fermentation to lactate; (S)-lactate from pyruvate: step 1/1. Functionally, interconverts simultaneously and stereospecifically pyruvate and lactate with concomitant interconversion of NADH and NAD(+). The sequence is that of L-lactate dehydrogenase A chain (ldha) from Lycodichthys dearborni (Antarctic eelpout).